We begin with the raw amino-acid sequence, 248 residues long: 1-(5-phosphoribosyl)-5-[(5-phosphoribosylamino)methylideneamino] imidazole-4-carboxamide isomerase (248 aa).

Catalysis depends on aspartate 8, which acts as the Proton acceptor. Residue aspartate 131 is the Proton donor of the active site.

Belongs to the HisA/HisF family.

Its subcellular location is the cytoplasm. The catalysed reaction is 1-(5-phospho-beta-D-ribosyl)-5-[(5-phospho-beta-D-ribosylamino)methylideneamino]imidazole-4-carboxamide = 5-[(5-phospho-1-deoxy-D-ribulos-1-ylimino)methylamino]-1-(5-phospho-beta-D-ribosyl)imidazole-4-carboxamide. Its pathway is amino-acid biosynthesis; L-histidine biosynthesis; L-histidine from 5-phospho-alpha-D-ribose 1-diphosphate: step 4/9. This Cupriavidus necator (strain ATCC 17699 / DSM 428 / KCTC 22496 / NCIMB 10442 / H16 / Stanier 337) (Ralstonia eutropha) protein is 1-(5-phosphoribosyl)-5-[(5-phosphoribosylamino)methylideneamino] imidazole-4-carboxamide isomerase.